Consider the following 180-residue polypeptide: UPF0340 protein LACR_0494 (180 aa).

This sequence belongs to the UPF0340 family.

This chain is UPF0340 protein LACR_0494, found in Lactococcus lactis subsp. cremoris (strain SK11).